We begin with the raw amino-acid sequence, 457 residues long: Embryogenesis-associated protein EMB8 (457 aa).

Residues 39-59 are disordered; it reads KKPAAGACEEQDELTSGSAAR. One can recognise an AB hydrolase-1 domain in the interval 151-391; sequence PVLILLPGLT…LVVTPNGGHL (241 aa). Residues Ser-231, Asp-361, and His-390 each act as charge relay system in the active site. A compositionally biased stretch (basic and acidic residues) spans 438–447; the sequence is VDSVHTRETN. Residues 438–457 are disordered; sequence VDSVHTRETNNYKSPIENVN. Residues 448 to 457 show a composition bias toward polar residues; the sequence is NYKSPIENVN.

Belongs to the AB hydrolase superfamily. AB hydrolase 4 family.

The polypeptide is Embryogenesis-associated protein EMB8 (EMB8) (Picea glauca (White spruce)).